Consider the following 72-residue polypeptide: uncharacterized protein (72 aa).

This is an uncharacterized protein from Vaccinia virus (strain Western Reserve) (VACV).